A 675-amino-acid polypeptide reads, in one-letter code: MNRFFNRELSWLAFNTRVLNEAKDESLPLLERLKFLAIYDTNLDEFYMIRVAGLKQLYEHKIASKGIDGASPEEQLEKIKHYLAHEIEERELEFQKIQALLFKKGLCITPYNELNLEQKAKAKTYFKEQLYALVLPFKLDSSHTFPPLANLTFALFARIKDKETQIISYALIKLPSFIFRFVELEKGLFVLAEEIVEAHLEELFLEHEILDCMAFRVTCDADIAITEDEAHDYADLMSKSLRKRNQGEIVRLQTQKGSQELLKTLLASLRSFQTHSYKKHKLTGMHIYKSAIMLNLGDLWELVNHSDFKALKSPNFTPKIHPHFNENDLFKSIEKQDLLLFHPYESFEPVIDLIEQAASDPATLSIKMTLYRVGKHSPIVKALIEAASKIQVSVLVELKARFDEESNLHWAKALERAGALVVYGVFKLKVHAKMLLITKKTDNQLRHFTHLSTGNYNPLSAKVYTDVSFFSAKNEIANDIIKLFHSLLTSSATNSALETLFMAPKQIKPKIIELIQNEMNHQQEGYIILKANALVDSEIIEWLYQASQKGVKIDLIIRGICCLKPQVKGLSENIRVYSIVGKYLEHARIYYFKHENIYFSSADLMPRNLERRVELLIPATNPKIAHKLLHILEIQLKDTLKRYELNSKGRYIKVSNPNDPLNSQDYFEKQALKTF.

N42 is an ATP binding site. R372 and R401 together coordinate Mg(2+). H431 acts as the Phosphohistidine intermediate in catalysis. Y464, R558, and H586 together coordinate ATP.

Belongs to the polyphosphate kinase 1 (PPK1) family. Mg(2+) is required as a cofactor. Post-translationally, an intermediate of this reaction is the autophosphorylated ppk in which a phosphate is covalently linked to a histidine residue through a N-P bond.

It catalyses the reaction [phosphate](n) + ATP = [phosphate](n+1) + ADP. Catalyzes the reversible transfer of the terminal phosphate of ATP to form a long-chain polyphosphate (polyP). This Helicobacter pylori (strain ATCC 700392 / 26695) (Campylobacter pylori) protein is Polyphosphate kinase.